Here is a 231-residue protein sequence, read N- to C-terminus: 7-cyano-7-deazaguanine synthase (231 aa).

8-18 (FSGGQDSTTCL) lines the ATP pocket. Positions 188, 197, 200, and 203 each coordinate Zn(2+).

The protein belongs to the QueC family. Zn(2+) is required as a cofactor.

It catalyses the reaction 7-carboxy-7-deazaguanine + NH4(+) + ATP = 7-cyano-7-deazaguanine + ADP + phosphate + H2O + H(+). It functions in the pathway purine metabolism; 7-cyano-7-deazaguanine biosynthesis. In terms of biological role, catalyzes the ATP-dependent conversion of 7-carboxy-7-deazaguanine (CDG) to 7-cyano-7-deazaguanine (preQ(0)). This is 7-cyano-7-deazaguanine synthase from Enterobacter sp. (strain 638).